The chain runs to 479 residues: Adenosylhomocysteinase (479 aa).

Substrate is bound by residues T65, D144, and E204. Position 205-207 (205-207 (TTT)) interacts with NAD(+). Positions 234 and 238 each coordinate substrate. Residues N239, 268-273 (GYGDVG), E291, N326, 347-349 (IGH), and N392 each bind NAD(+).

Belongs to the adenosylhomocysteinase family. NAD(+) is required as a cofactor.

The protein resides in the cytoplasm. It catalyses the reaction S-adenosyl-L-homocysteine + H2O = L-homocysteine + adenosine. It participates in amino-acid biosynthesis; L-homocysteine biosynthesis; L-homocysteine from S-adenosyl-L-homocysteine: step 1/1. In terms of biological role, may play a key role in the regulation of the intracellular concentration of adenosylhomocysteine. In Variovorax paradoxus (strain S110), this protein is Adenosylhomocysteinase.